Here is a 607-residue protein sequence, read N- to C-terminus: UvrABC system protein C (607 aa).

Positions 16–94 (GRPGVYRMFD…IKEWRPPYNI (79 aa)) constitute a GIY-YIG domain. A UVR domain is found at 203–238 (NALSEELSASMEKASMALEFERAAELRDQISMLRRV).

Belongs to the UvrC family. In terms of assembly, interacts with UvrB in an incision complex.

It is found in the cytoplasm. Functionally, the UvrABC repair system catalyzes the recognition and processing of DNA lesions. UvrC both incises the 5' and 3' sides of the lesion. The N-terminal half is responsible for the 3' incision and the C-terminal half is responsible for the 5' incision. The chain is UvrABC system protein C from Ectopseudomonas mendocina (strain ymp) (Pseudomonas mendocina).